Consider the following 419-residue polypeptide: Putative competence-damage inducible protein (419 aa).

The protein belongs to the CinA family.

The protein is Putative competence-damage inducible protein of Streptococcus agalactiae serotype III (strain NEM316).